Here is a 148-residue protein sequence, read N- to C-terminus: Putative fusion protein (148 aa).

The tract at residues 1–34 (MDRALSTFPGDDDETNERNINHREKTSGEHGHYE) is disordered. Residues 16 to 34 (NERNINHREKTSGEHGHYE) show a composition bias toward basic and acidic residues.

This sequence belongs to the poxviruses fusion protein family. Homotrimer, covalently linked.

The protein resides in the virion membrane. The protein is Putative fusion protein of Sheeppox virus (strain KS-1) (SPPV).